We begin with the raw amino-acid sequence, 391 residues long: Phosphoglycerate kinase (391 aa).

Substrate contacts are provided by residues 21–23 (DLN), R36, 59–62 (HLGR), R113, and R146. ATP-binding positions include K197, E319, and 345–348 (GGDT).

This sequence belongs to the phosphoglycerate kinase family. As to quaternary structure, monomer.

Its subcellular location is the cytoplasm. The catalysed reaction is (2R)-3-phosphoglycerate + ATP = (2R)-3-phospho-glyceroyl phosphate + ADP. It functions in the pathway carbohydrate degradation; glycolysis; pyruvate from D-glyceraldehyde 3-phosphate: step 2/5. In Pseudoalteromonas atlantica (strain T6c / ATCC BAA-1087), this protein is Phosphoglycerate kinase.